Reading from the N-terminus, the 265-residue chain is Small ribosomal subunit protein uS2 (265 aa).

The protein belongs to the universal ribosomal protein uS2 family.

This is Small ribosomal subunit protein uS2 from Gluconobacter oxydans (strain 621H) (Gluconobacter suboxydans).